Reading from the N-terminus, the 443-residue chain is Tubulin beta chain (443 aa).

GTP is bound by residues Gln-11, Glu-69, Ser-138, Gly-142, Thr-143, Gly-144, Asn-204, and Asn-226. Glu-69 contacts Mg(2+). The tract at residues 421-443 is disordered; sequence EYQQYQDASAEEEGEFGEEEEEN. A compositionally biased stretch (acidic residues) spans 429–443; sequence SAEEEGEFGEEEEEN.

The protein belongs to the tubulin family. In terms of assembly, dimer of alpha and beta chains. A typical microtubule is a hollow water-filled tube with an outer diameter of 25 nm and an inner diameter of 15 nM. Alpha-beta heterodimers associate head-to-tail to form protofilaments running lengthwise along the microtubule wall with the beta-tubulin subunit facing the microtubule plus end conferring a structural polarity. Microtubules usually have 13 protofilaments but different protofilament numbers can be found in some organisms and specialized cells. Requires Mg(2+) as cofactor.

Its subcellular location is the cytoplasm. It is found in the cytoskeleton. Its function is as follows. Tubulin is the major constituent of microtubules, a cylinder consisting of laterally associated linear protofilaments composed of alpha- and beta-tubulin heterodimers. Microtubules grow by the addition of GTP-tubulin dimers to the microtubule end, where a stabilizing cap forms. Below the cap, tubulin dimers are in GDP-bound state, owing to GTPase activity of alpha-tubulin. This Polytomella agilis (Quadriflagellate alga) protein is Tubulin beta chain (TUBB1).